The chain runs to 429 residues: Glutamate-1-semialdehyde 2,1-aminomutase 2 (429 aa).

K268 carries the N6-(pyridoxal phosphate)lysine modification.

The protein belongs to the class-III pyridoxal-phosphate-dependent aminotransferase family. HemL subfamily. In terms of assembly, homodimer. Pyridoxal 5'-phosphate serves as cofactor.

The protein localises to the cytoplasm. The enzyme catalyses (S)-4-amino-5-oxopentanoate = 5-aminolevulinate. It participates in porphyrin-containing compound metabolism; protoporphyrin-IX biosynthesis; 5-aminolevulinate from L-glutamyl-tRNA(Glu): step 2/2. The protein is Glutamate-1-semialdehyde 2,1-aminomutase 2 of Bacillus cereus (strain AH820).